We begin with the raw amino-acid sequence, 21 residues long: Major outer membrane protein P44 (21 aa).

As to quaternary structure, monomer.

The protein resides in the cell outer membrane. The chain is Major outer membrane protein P44 from Mannheimia haemolytica (Pasteurella haemolytica).